The following is a 78-amino-acid chain: Sec-independent protein translocase protein TatA (78 aa).

A helical membrane pass occupies residues 1–21; sequence MGSLSIWHWIVVIGVVLLLFG. A compositionally biased stretch (basic and acidic residues) spans 42-60; that stretch reads GLQDDEKTAEKPEPVKSID. The disordered stretch occupies residues 42 to 78; the sequence is GLQDDEKTAEKPEPVKSIDHTAPPAAAPRTDVGSKVV.

The protein belongs to the TatA/E family. In terms of assembly, the Tat system comprises two distinct complexes: a TatABC complex, containing multiple copies of TatA, TatB and TatC subunits, and a separate TatA complex, containing only TatA subunits. Substrates initially bind to the TatABC complex, which probably triggers association of the separate TatA complex to form the active translocon.

It localises to the cell inner membrane. Part of the twin-arginine translocation (Tat) system that transports large folded proteins containing a characteristic twin-arginine motif in their signal peptide across membranes. TatA could form the protein-conducting channel of the Tat system. This Rhodopseudomonas palustris (strain BisB18) protein is Sec-independent protein translocase protein TatA.